A 299-amino-acid polypeptide reads, in one-letter code: Probable lipid kinase YegS (299 aa).

The DAGKc domain maps to alanine 2–threonine 133. Residues threonine 40, glycine 66–glutamate 72, and threonine 95 each bind ATP. The Mg(2+) site is built by leucine 215, aspartate 218, and leucine 220. Residue glutamate 271 is the Proton acceptor of the active site.

Belongs to the diacylglycerol/lipid kinase family. YegS lipid kinase subfamily. The cofactor is Mg(2+). Ca(2+) serves as cofactor.

The protein resides in the cytoplasm. Its function is as follows. Probably phosphorylates lipids; the in vivo substrate is unknown. The sequence is that of Probable lipid kinase YegS from Escherichia coli O127:H6 (strain E2348/69 / EPEC).